The chain runs to 544 residues: MAKSILFSEDARKKMQEGVDKLANTVKVTLGPKGRNVVLDKKFGSPLITNDGVTIAKEIELEEPYENMGAQLVKEVATKTNDVAGDGTTTATLLAQAIIREGLKNVTAGANPMLIRQGIKIAVDKAVEEIKKVSRTVNGKEDIARIAAISASDEEIGKLIADAMEKVGNEGVITVEESKTMGTELDVVEGMEFDRGYLSAYMVTDTEKMEAVLDDPYILITDKKISTIQDILPLLEKMVQQGKKLLIIAEDVEGEALTTLVVNKLRGTFTCVAVKAPGFGDRRKEMLQDIAILTDGKVISEELGRDLKEVSLEDLGRAESVKIDKENTTIVNGRGDKKSIQDRVSQIKAQIEETTSEFDKEKLQERLAKLSGGVAVIKVGAATETELKEKKMRIEDALAATKAGVEEGMGPGGGTAYVNAIPEVSKLTSDVADVKVGIDIITKALEEPVRQIAANAGVEGSVIIEKVKNSEPGVGYDVLTDKYVNMIDNGIVDPTKVTRSALQNAASVAATFLTTEAAVVDIPDKNNAAGLPGAPGMGGMDGMY.

ATP contacts are provided by residues 29-32, 86-90, Gly413, 477-479, and Asp493; these read TLGP, DGTTT, and DVL.

It belongs to the chaperonin (HSP60) family. In terms of assembly, forms a cylinder of 14 subunits composed of two heptameric rings stacked back-to-back. Interacts with the co-chaperonin GroES.

The protein localises to the cytoplasm. The catalysed reaction is ATP + H2O + a folded polypeptide = ADP + phosphate + an unfolded polypeptide.. In terms of biological role, together with its co-chaperonin GroES, plays an essential role in assisting protein folding. The GroEL-GroES system forms a nano-cage that allows encapsulation of the non-native substrate proteins and provides a physical environment optimized to promote and accelerate protein folding. The protein is Chaperonin GroEL of Clostridium kluyveri (strain NBRC 12016).